The sequence spans 701 residues: SH3 domain-binding protein 1 (701 aa).

The span at 1–10 shows a compositional bias: basic residues; that stretch reads MMKRQLHRMR. 2 disordered regions span residues 1 to 23 and 160 to 182; these read MMKR…RTPE and SQAT…HSHT. The interval 1–275 is interaction with CGNL1; it reads MMKRQLHRMR…TATHFPRVYG (275 aa). The BAR domain maps to 17-262; that stretch reads SLGRTPETAE…RENHGQADHS (246 aa). Residues S175, S241, S262, and S264 each carry the phosphoserine modification. Residues 276–469 enclose the Rho-GAP domain; that stretch reads VSLATHLQEL…ALIQSADTLF (194 aa). An interaction with CD2AP region spans residues 470 to 701; the sequence is PGDINFNVSG…RPRSLASETN (232 aa). Residues 496–701 form a disordered region; that stretch reads SEELPSTAVP…RPRSLASETN (206 aa). The span at 508–522 shows a compositional bias: pro residues; it reads ATTPAPAPAPAPAPA. Residues S544 and S550 each carry the phosphoserine modification. 2 stretches are compositionally biased toward pro residues: residues 570–579 and 587–596; these read PARPTMPPPQ and PPAPPLPPGS. Residue T601 is modified to Phosphothreonine. Positions 616 to 625 match the SH3-binding motif; sequence APTVPPPLPP. 2 stretches are compositionally biased toward pro residues: residues 618–630 and 641–652; these read TVPP…PPQP and SPSPASPGPASP. At T626 the chain carries Phosphothreonine. The residue at position 653 (S653) is a Phosphoserine. Over residues 666–677 the composition is skewed to low complexity; the sequence is GAATAEGGAPEA. The span at 682-692 shows a compositional bias: pro residues; the sequence is PTPPAIPPQPR.

In terms of assembly, interacts with RAC1. Interacts with the exocyst via EXOC4 and EXOC8; required for the localization of both SH3BP1 and the exocyst to the leading edge of migrating cells. Interacts with CD2AP and CGNL1; probably part of a complex at cell junctions. Interacts with CAPZA1; recruits CAPZA1 to forming cell junctions. May interact with AFDN. Interacts with PLXND1; they dissociate upon SEMA3E binding to PLXND1 allowing SH3BP1 to transduce downstream signal through RAC1 inactivation. Interacts with ABL1, GRB2 and SRC (via SH3 domain).

The protein resides in the cell projection. It is found in the cell junction. It localises to the tight junction. Its subcellular location is the adherens junction. The protein localises to the phagocytic cup. The protein resides in the nucleus. It is found in the cytoplasm. It localises to the cytosol. GTPase activating protein (GAP) which specifically converts GTP-bound Rho-type GTPases including RAC1 and CDC42 in their inactive GDP-bound form. By specifically inactivating RAC1 at the leading edge of migrating cells, it regulates the spatiotemporal organization of cell protrusions which is important for proper cell migration. Also negatively regulates CDC42 in the process of actin remodeling and the formation of epithelial cell junctions. Through its GAP activity toward RAC1 and/or CDC42 plays a specific role in phagocytosis of large particles. Specifically recruited by a PI3 kinase/PI3K-dependent mechanism to sites of large particles engagement, inactivates RAC1 and/or CDC42 allowing the reorganization of the underlying actin cytoskeleton required for engulfment. It also plays a role in angiogenesis and the process of repulsive guidance as part of a semaphorin-plexin signaling pathway. Following the binding of PLXND1 to extracellular SEMA3E it dissociates from PLXND1 and inactivates RAC1, inducing the intracellular reorganization of the actin cytoskeleton and the collapse of cells. This chain is SH3 domain-binding protein 1, found in Homo sapiens (Human).